The chain runs to 126 residues: Nuclear transport factor 2B (126 aa).

N-acetylserine is present on S2. An NTF2 domain is found at 9 to 123; it reads VSKAFVEHYY…FYVFNDIFRL (115 aa).

As to quaternary structure, interacts with RAN1. As to expression, expressed in roots, stems, leaves and flowers, and, at low levels, in siliques.

It is found in the cytoplasm. Its subcellular location is the nucleus. The protein localises to the nucleus envelope. Facilitates protein transport into the nucleus. Interacts with various nucleoporins and with Ran-GDP. Could be part of a multicomponent system of cytosolic factors that assemble at the pore complex during nuclear import. The polypeptide is Nuclear transport factor 2B (Arabidopsis thaliana (Mouse-ear cress)).